The chain runs to 451 residues: MRIFGTDGIRGTINNYPMTPEVCLRAGMALCFLLKKRLPHKPKILIGKDTRISGYVIESALTSGITSMGGDVYLVGPIPTPAVAFLVKSMRVDAGIVISASHNPFSDNGIKIFSNDGFKLTEELENDIEKLINDKDFPAIRPSARELGKAYRIEDAQGRYIEFIKSTLPKDSNLEGLKVAIDPANGAAYKITPTLFHELGAEVITINDKPDGVNINKECGALYPESLIKIVKETQAHFGVAHDGDADRTILVDEKGNIVDGDFILTILAEELKKERKLKKNTVVATIMTNMGVENYLKNAGIKMIRTKVGDKYVVEEMLKGGYNLGGEQSGHIICMDYTNTGDGPITAVQMAYIIKKNQFYLSELIKNIPRYPQALKNIKIPEKLPKDEVKNVIKKLSQKASTLEKNMRGRIIIRPSGTEPKIRIMVEDENPERLKQVLDELEAVANMMLS.

Ser-101 serves as the catalytic Phosphoserine intermediate. Positions 101, 243, 245, and 247 each coordinate Mg(2+). Residue Ser-101 is modified to Phosphoserine.

Belongs to the phosphohexose mutase family. The cofactor is Mg(2+). Post-translationally, activated by phosphorylation.

The catalysed reaction is alpha-D-glucosamine 1-phosphate = D-glucosamine 6-phosphate. Functionally, catalyzes the conversion of glucosamine-6-phosphate to glucosamine-1-phosphate. This is Phosphoglucosamine mutase from Thermodesulfovibrio yellowstonii (strain ATCC 51303 / DSM 11347 / YP87).